The sequence spans 263 residues: Ubiquinone/menaquinone biosynthesis C-methyltransferase UbiE (263 aa).

The S-adenosyl-L-methionine site is built by Thr-86, Asp-107, and Ser-152.

The protein belongs to the class I-like SAM-binding methyltransferase superfamily. MenG/UbiE family.

The catalysed reaction is a 2-demethylmenaquinol + S-adenosyl-L-methionine = a menaquinol + S-adenosyl-L-homocysteine + H(+). The enzyme catalyses a 2-methoxy-6-(all-trans-polyprenyl)benzene-1,4-diol + S-adenosyl-L-methionine = a 5-methoxy-2-methyl-3-(all-trans-polyprenyl)benzene-1,4-diol + S-adenosyl-L-homocysteine + H(+). It functions in the pathway quinol/quinone metabolism; menaquinone biosynthesis; menaquinol from 1,4-dihydroxy-2-naphthoate: step 2/2. The protein operates within cofactor biosynthesis; ubiquinone biosynthesis. In terms of biological role, methyltransferase required for the conversion of demethylmenaquinol (DMKH2) to menaquinol (MKH2) and the conversion of 2-polyprenyl-6-methoxy-1,4-benzoquinol (DDMQH2) to 2-polyprenyl-3-methyl-6-methoxy-1,4-benzoquinol (DMQH2). The sequence is that of Ubiquinone/menaquinone biosynthesis C-methyltransferase UbiE from Brucella anthropi (strain ATCC 49188 / DSM 6882 / CCUG 24695 / JCM 21032 / LMG 3331 / NBRC 15819 / NCTC 12168 / Alc 37) (Ochrobactrum anthropi).